The sequence spans 578 residues: MSIQAFVFCGKGSNLAPFTQPDFPFQTQNKDSTAATSGDKLNELVNSALDSTVINEFMQHSTRLPKALLPIGNRPMIEYVLDWCDQADFKEISVVAPVDEIELIESGLTSFLSLRKQQFELIYKALSNSNHSHHLQDPKKINFIPSKANSTGESLQKELLPRINGDFVILPCDFVTDIPPQVLVDQFRNRDDNNLAMTIYYKNSLDSSIDKKQQQKQKQQQFFTVYSENEDSERQPILLDVYSQRDVTKTKYLQIRSHLLWNYPNLTVSTKLLNSFIYFCSFELCQLLKLGPQSMSRQASFKDPFTGNQQQQNPPTTDDDEDRNHDDDDDYKPSATSIQPTYFKKKNDLILDPINCNKSLSKVFRDLSRRSWQHSKPREPIGIFILPNETLFIRANNLNAYMDANRFVLKIKSQTMFTKNIQIQSAAIGADAIVDPKCQISAHSNVKMSVLGTQANIGSRCRVAGSLLFPGVHLGDEVILENCIIGPMAKIGSKCKLSNCYIEGHYVVEPKNNFKGETLANVYLDEDEEDELIYDDSVIAGESEIAEETDSDDRSDEDSDDSEYTDEYEYEDDGLFER.

A phosphoserine mark is found at Ser296 and Ser300. Disordered regions lie at residues Gln298–Ser337 and Asp535–Arg578. Residue Thr306 is modified to Phosphothreonine. Positions Glu544–Arg578 are enriched in acidic residues.

It belongs to the eIF-2B gamma/epsilon subunits family. In terms of assembly, component of the translation initiation factor 2B (eIF2B) complex which is a heterodecamer of two sets of five different subunits: alpha, beta, gamma, delta and epsilon. Subunits alpha, beta and delta comprise a regulatory subcomplex and subunits epsilon and gamma comprise a catalytic subcomplex. Within the complex, the hexameric regulatory complex resides at the center, with the two heterodimeric catalytic subcomplexes bound on opposite sides.

It localises to the cytoplasm. It is found in the cytosol. Functionally, acts as a component of the translation initiation factor 2B (eIF2B) complex, which catalyzes the exchange of GDP for GTP on the eukaryotic initiation factor 2 (eIF2) complex gamma subunit. Its guanine nucleotide exchange factor activity is repressed when bound to eIF2 complex phosphorylated on the alpha subunit, thereby limiting the amount of methionyl-initiator methionine tRNA available to the ribosome and consequently global translation is repressed. It activates the synthesis of GCN4 in yeast under amino acid starvation conditions by suppressing the inhibitory effects of multiple AUG codons present in the leader of GCN4 mRNA. It may promote either repression or activation of GCN4 expression depending on amino acid availability. GCD1 stabilizes the interaction between eIF2 and GCD6 and stimulates the catalytic activity in vitro. The sequence is that of Translation initiation factor eIF2B subunit gamma (GCD1) from Saccharomyces cerevisiae (strain ATCC 204508 / S288c) (Baker's yeast).